The sequence spans 58 residues: ComX pheromone (58 aa).

Positions 1–52 (MKQDMIDYLMKNPQVLTKLENGEASLIGIPDKLIPSIVDIFNKKMTLSKKCK) are excised as a propeptide. W56 carries 3'-geranyl-2',N2-cyclotryptophan; in strain RO-E-2 /NRRL B-23055 lipidation.

As to quaternary structure, interacts directly with the sensor histidine kinase ComP and stimulates its activity. Post-translationally, trp-56 is modified by geranylation, which is essential for activity. Modified by the tryptophan prenyltransferase ComQ before export to the extracellular environment. The type of isoprenyl derivative differs among the different pherotypes and depends on ComX primary sequence.

It localises to the secreted. In terms of biological role, part of a major quorum-sensing system that regulates the development of genetic competence. Acts through the activation of the two-component regulatory system ComP/ComA composed of a sensor histidine kinase, ComP, and a response regulator, ComA. The chain is ComX pheromone from Bacillus spizizenii (Bacillus subtilis subsp. spizizenii).